Here is an 829-residue protein sequence, read N- to C-terminus: MEYNHQEIEAKWQKYWADNKTFRTGTDKNKPKFYALDMFPYPSGAGLHVGHPEGYTATDILSRYKRAQGFNVLHPMGWDAFGLPAEQYAMDTGNDPAEFTAENIANFKRQINSLGFSYDWEREVNTTDPNFYKWTQWIFTKLYEKGLAYEAEVAVNWVEELGTAIANEEVLPDGTSERGGYPVVRKPMRQWMLKITAYAERLLEDLEEVDWPESIKEMQRNWIGKSVGADVTFEVAGTDKSFEVFTTRPDTLFGATYAVLAPEHDLVDAITTPEQKEAVAEYRRKASLKSDLARTDLSKEKTGAFTGAYAINPINGRKMPIWVADYVLASYGHGAVMAVPAHDERDWEFAKVYGLEILPVVEGGNVEEAVYTEDGPHINSEFLNGLDKAQAIEKAIEFLEEKKIGKKKITYRLRDWLFSRQRYWGEPIPIIHWEDGTSTALSEDELPLVLPVTSDIKPSGTGESPLANLTDWLEVTRADGLKGRRETNTMPQWAGSSWYYLRYIDPNNSEALADPELLKEWLPVDIYVGGAEHAVLHLLYARFWHKVLYDLGVVPTKEPFQKLFNQGMILGTSYRDHRGALVATDKVEKRDGGFYHMETGEALEQAPAKMSKSLKNVVNPDDVVEHYGADTLRVYEMFMGPLDASIPWSEEGLEGARKFLDRAVRMIENSEIKAENNGELDKVYNETVKNVTERLDLMYFNTAISQLMIFVNAVNKAKALPLEYANGFVQLLAPFAPHIAEELWVKLGNEAGISYVAWPTFDESKLIESEVEIVVQINGKLKAKIKIAKDLAREELEKIGRESVAEALEGKNVVKVIAVPNKLVNIVVK.

The 'HIGH' region motif lies at 40–51 (PYPSGAGLHVGH). A 'KMSKS' region motif is present at residues 609 to 613 (KMSKS). An ATP-binding site is contributed by lysine 612.

This sequence belongs to the class-I aminoacyl-tRNA synthetase family.

Its subcellular location is the cytoplasm. It catalyses the reaction tRNA(Leu) + L-leucine + ATP = L-leucyl-tRNA(Leu) + AMP + diphosphate. This chain is Leucine--tRNA ligase, found in Lactococcus lactis subsp. lactis (strain IL1403) (Streptococcus lactis).